We begin with the raw amino-acid sequence, 399 residues long: Acetate kinase (399 aa).

Mg(2+) is bound at residue N9. K16 is a binding site for ATP. Position 90 (R90) interacts with substrate. The active-site Proton donor/acceptor is the D147. ATP contacts are provided by residues 207–211 (HIGNG), 282–284 (DLR), and 330–334 (GVGEN). Residue E384 coordinates Mg(2+).

It belongs to the acetokinase family. As to quaternary structure, homodimer. It depends on Mg(2+) as a cofactor. The cofactor is Mn(2+).

It is found in the cytoplasm. It carries out the reaction acetate + ATP = acetyl phosphate + ADP. Its pathway is metabolic intermediate biosynthesis; acetyl-CoA biosynthesis; acetyl-CoA from acetate: step 1/2. Catalyzes the formation of acetyl phosphate from acetate and ATP. Can also catalyze the reverse reaction. The sequence is that of Acetate kinase from Staphylococcus saprophyticus subsp. saprophyticus (strain ATCC 15305 / DSM 20229 / NCIMB 8711 / NCTC 7292 / S-41).